The sequence spans 495 residues: MASGILLNVKEEVTCPICLELLTEPLSLPCGHSFCQACITANHKKSMLYKEEERSCPVCRISYQPENIQPNRHVANIVEKLREVKLSPEEGQKVDHCARHGEKLLLFCQEDRKVICWLCERSQEHRGHHTFLMEEVAQEYHVKLQTALEMLRQKQQEAEKLEADIREEKASWKIQIDYDKTNVLADFEQLREILDWEESNELQYLEKEEEDILKSLTKSETKMVRQTQYVRELISDLEHRLQGSMMELLQGVDGIIKRIENMTLKKPETFHKNQRRVFRAPALKGMLDMFRELTDVRRYWVDVTLAPNNISHVVIAEDKRQVSSRNPQIMYWAQGKLFQSLKNFNYCTGILGSQSITSGKHYWEVDVSKKSAWILGVCAGFQPDAMYDVEQNENYQPKYGYWVIGLQEGVKYSVFQDGSSHTPFAPFIAPLSVIFCPDRVGVFVDYEACTVSFFNITNHGFLIYKFSQCSFSKPVFPYLNPRKCTVPMTLCSPSS.

Ala-2 is modified (N-acetylalanine). The RING-type zinc finger occupies 15–60; it reads CPICLELLTEPLSLPCGHSFCQACITANHKKSMLYKEEERSCPVCR. Phosphoserine is present on Ser-87. The B box-type zinc finger occupies 92-133; the sequence is QKVDHCARHGEKLLLFCQEDRKVICWLCERSQEHRGHHTFLM. Residues Cys-97, His-100, Cys-119, and His-125 each coordinate Zn(2+). Positions 137 to 177 form a coiled coil; the sequence is AQEYHVKLQTALEMLRQKQQEAEKLEADIREEKASWKIQID. Positions 187–200 are required for interaction with GABARAP and for autophagy; it reads FEQLREILDWEESN. Residues 283-495 form the B30.2/SPRY domain; the sequence is LKGMLDMFRE…VPMTLCSPSS (213 aa).

Belongs to the TRIM/RBCC family. As to quaternary structure, can form homodimers and homotrimers. In addition to lower-order dimerization, also exhibits a higher-order multimerization and both low- and high-order multimerizations are essential for its restriction activity. Interacts with BTBD1 and BTBD2. Interacts with PSMC4, PSMC5, PSMD7 and HSPA8/HSC70. Interacts (via B30.2/SPRY domain) with HSPA1A/B. Interacts with PSMC2, MAP3K7/TAK1, TAB2 and TAB3. Interacts with SQSTM1. Interacts with TRIM6 and TRIM34. Interacts with ULK1 (phosphorylated form), GABARAP, GABARAPL1, GABARAPL2, MAP1LC3A, MAP1LC3C and BECN1. Post-translationally, degraded in a proteasome-independent fashion in the absence of viral infection but in a proteasome-dependent fashion following exposure to restriction sensitive virus. Autoubiquitinated in a RING finger- and UBE2D2-dependent manner. Monoubiquitinated by TRIM21. Deubiquitinated by Yersinia YopJ. Ubiquitination may not lead to proteasomal degradation.

It is found in the cytoplasm. Its subcellular location is the nucleus. It catalyses the reaction S-ubiquitinyl-[E2 ubiquitin-conjugating enzyme]-L-cysteine + [acceptor protein]-L-lysine = [E2 ubiquitin-conjugating enzyme]-L-cysteine + N(6)-ubiquitinyl-[acceptor protein]-L-lysine.. Its pathway is protein modification; protein ubiquitination. In terms of biological role, capsid-specific restriction factor that prevents infection from non-host-adapted retroviruses. Blocks viral replication early in the life cycle, after viral entry but before reverse transcription. In addition to acting as a capsid-specific restriction factor, also acts as a pattern recognition receptor that activates innate immune signaling in response to the retroviral capsid lattice. Binding to the viral capsid triggers its E3 ubiquitin ligase activity, and in concert with the heterodimeric ubiquitin conjugating enzyme complex UBE2V1-UBE2N (also known as UBC13-UEV1A complex) generates 'Lys-63'-linked polyubiquitin chains, which in turn are catalysts in the autophosphorylation of the MAP3K7/TAK1 complex (includes TAK1, TAB2, and TAB3). Activation of the MAP3K7/TAK1 complex by autophosphorylation results in the induction and expression of NF-kappa-B and MAPK-responsive inflammatory genes, thereby leading to an innate immune response in the infected cell. Plays a role in regulating autophagy through activation of autophagy regulator BECN1 by causing its dissociation from its inhibitors BCL2 and TAB2. The sequence is that of Tripartite motif-containing protein 5 (TRIM5) from Erythrocebus patas (Red guenon).